The chain runs to 67 residues: uncharacterized protein (67 aa).

The helical transmembrane segment at 26–46 (CYLLFCFLECFLNLFKKCGVF) threads the bilayer.

It belongs to the plectrovirus ORF11 family.

Its subcellular location is the host membrane. This is an uncharacterized protein from Spiroplasma virus SpV1-C74 (SpV1).